A 671-amino-acid chain; its full sequence is DNA ligase (671 aa).

Residues 31–35, 80–81, and glutamate 110 each bind NAD(+); these read DAEYD and SL. Lysine 112 functions as the N6-AMP-lysine intermediate in the catalytic mechanism. NAD(+) contacts are provided by arginine 133, glutamate 167, lysine 283, and lysine 307. Residues cysteine 401, cysteine 404, cysteine 419, and cysteine 424 each coordinate Zn(2+). Residues 587–671 enclose the BRCT domain; the sequence is EEELVFTGKT…YLPDEGGLNE (85 aa).

This sequence belongs to the NAD-dependent DNA ligase family. LigA subfamily. Mg(2+) is required as a cofactor. Mn(2+) serves as cofactor.

The catalysed reaction is NAD(+) + (deoxyribonucleotide)n-3'-hydroxyl + 5'-phospho-(deoxyribonucleotide)m = (deoxyribonucleotide)n+m + AMP + beta-nicotinamide D-nucleotide.. Its function is as follows. DNA ligase that catalyzes the formation of phosphodiester linkages between 5'-phosphoryl and 3'-hydroxyl groups in double-stranded DNA using NAD as a coenzyme and as the energy source for the reaction. It is essential for DNA replication and repair of damaged DNA. The chain is DNA ligase from Listeria monocytogenes serotype 4b (strain F2365).